An 89-amino-acid chain; its full sequence is DNA/RNA-binding protein Alba (89 aa).

Lysine 11 carries the N6-acetyllysine modification.

It belongs to the histone-like Alba family. Acetylated. Acetylation at Lys-11 decreases DNA-binding affinity.

It is found in the cytoplasm. It localises to the chromosome. In terms of biological role, binds double-stranded DNA tightly but without sequence specificity. Involved in DNA compaction. This is DNA/RNA-binding protein Alba from Thermoplasma acidophilum (strain ATCC 25905 / DSM 1728 / JCM 9062 / NBRC 15155 / AMRC-C165).